The following is a 137-amino-acid chain: Ribosome-binding factor A (137 aa).

It belongs to the RbfA family. In terms of assembly, monomer. Binds 30S ribosomal subunits, but not 50S ribosomal subunits or 70S ribosomes.

It localises to the cytoplasm. In terms of biological role, one of several proteins that assist in the late maturation steps of the functional core of the 30S ribosomal subunit. Associates with free 30S ribosomal subunits (but not with 30S subunits that are part of 70S ribosomes or polysomes). Required for efficient processing of 16S rRNA. May interact with the 5'-terminal helix region of 16S rRNA. This is Ribosome-binding factor A from Erwinia tasmaniensis (strain DSM 17950 / CFBP 7177 / CIP 109463 / NCPPB 4357 / Et1/99).